Here is a 227-residue protein sequence, read N- to C-terminus: PKHD-type hydroxylase Bpro_3048 (227 aa).

A Fe2OG dioxygenase domain is found at 78–179 (KIFTPRINRY…RLACFFWVES (102 aa)). Fe cation is bound by residues H97, D99, and H160. R170 contributes to the 2-oxoglutarate binding site.

The cofactor is Fe(2+). L-ascorbate serves as cofactor.

The protein is PKHD-type hydroxylase Bpro_3048 of Polaromonas sp. (strain JS666 / ATCC BAA-500).